A 486-amino-acid chain; its full sequence is Arginine/agmatine antiporter (486 aa).

Helical transmembrane passes span 12-32 (LGAI…GIFS), 41-61 (AGAG…FFIA), 85-105 (GFGP…QIFG), 129-149 (NTIP…FIVL), 161-181 (IGTI…AFFF), 211-231 (STML…VMSA), 242-262 (ATIL…LLPF), 296-316 (IGLL…VAEI), 341-361 (VSLY…YFST), 367-387 (MLSI…AFLV), 418-438 (IWLI…LLAL), and 461-481 (EVTK…LFST).

Belongs to the amino acid-polyamine-organocation (APC) superfamily. Basic amino acid/polyamine antiporter (APA) (TC 2.A.3.2) family.

The protein resides in the cell inner membrane. Functionally, catalyzes the exchange of L-arginine for agmatine. The arginine uptake by the bacterium in the macrophage may be a virulence factor against the host innate immune response. This chain is Arginine/agmatine antiporter (aaxC), found in Chlamydia felis (strain Fe/C-56) (Chlamydophila felis).